An 83-amino-acid chain; its full sequence is Small ribosomal subunit protein uS17 (83 aa).

It belongs to the universal ribosomal protein uS17 family. As to quaternary structure, part of the 30S ribosomal subunit.

Functionally, one of the primary rRNA binding proteins, it binds specifically to the 5'-end of 16S ribosomal RNA. The polypeptide is Small ribosomal subunit protein uS17 (Pseudoalteromonas atlantica (strain T6c / ATCC BAA-1087)).